Consider the following 237-residue polypeptide: Probable glutathione-independent glyoxalase SNO4 (237 aa).

Residues Cys138, His139, and Glu170 contribute to the active site.

The protein belongs to the peptidase C56 family. HSP31-like subfamily. As to quaternary structure, homodimer.

The protein localises to the cytoplasm. It localises to the P-body. It catalyses the reaction methylglyoxal + H2O = (R)-lactate + H(+). Catalyzes the conversion of methylglyoxal (MG) to D-lactate in a single glutathione (GSH)-independent step. May play a role in detoxifying endogenously produced glyoxals. Involved in protection against reactive oxygen species (ROS). Important for viability in stationary phase. May negatively regulate TORC1 in response to nutrient limitation. This Saccharomyces cerevisiae (strain ATCC 204508 / S288c) (Baker's yeast) protein is Probable glutathione-independent glyoxalase SNO4.